We begin with the raw amino-acid sequence, 301 residues long: Ethylmalonyl-CoA decarboxylase (301 aa).

Lysine 211 is modified (N6-acetyllysine; alternate). At lysine 211 the chain carries N6-succinyllysine; alternate. Lysine 295 is modified (N6-succinyllysine).

Belongs to the enoyl-CoA hydratase/isomerase family.

The protein localises to the cytoplasm. It localises to the cytosol. The enzyme catalyses (2S)-ethylmalonyl-CoA + H(+) = butanoyl-CoA + CO2. It carries out the reaction (S)-methylmalonyl-CoA + H(+) = propanoyl-CoA + CO2. It catalyses the reaction (2R)-ethylmalonyl-CoA + H(+) = butanoyl-CoA + CO2. Its function is as follows. Decarboxylates ethylmalonyl-CoA, a potentially toxic metabolite, to form butyryl-CoA, suggesting it might be involved in metabolite proofreading. Acts preferentially on (S)-ethylmalonyl-CoA but also has some activity on the (R)-isomer. Also has methylmalonyl-CoA decarboxylase activity at lower level. This is Ethylmalonyl-CoA decarboxylase (ECHDC1) from Pongo abelii (Sumatran orangutan).